Consider the following 244-residue polypeptide: Eukaryotic translation initiation factor 6 (244 aa).

It belongs to the eIF-6 family. In terms of assembly, monomer. Associates with the 60S ribosomal subunit.

The protein localises to the cytoplasm. It is found in the nucleus. The protein resides in the nucleolus. Binds to the 60S ribosomal subunit and prevents its association with the 40S ribosomal subunit to form the 80S initiation complex in the cytoplasm. May also be involved in ribosome biogenesis. The sequence is that of Eukaryotic translation initiation factor 6 (eif6) from Dictyostelium discoideum (Social amoeba).